The chain runs to 223 residues: ATP phosphoribosyltransferase (223 aa).

It belongs to the ATP phosphoribosyltransferase family. Short subfamily. Heteromultimer composed of HisG and HisZ subunits.

It localises to the cytoplasm. It catalyses the reaction 1-(5-phospho-beta-D-ribosyl)-ATP + diphosphate = 5-phospho-alpha-D-ribose 1-diphosphate + ATP. Its pathway is amino-acid biosynthesis; L-histidine biosynthesis; L-histidine from 5-phospho-alpha-D-ribose 1-diphosphate: step 1/9. Catalyzes the condensation of ATP and 5-phosphoribose 1-diphosphate to form N'-(5'-phosphoribosyl)-ATP (PR-ATP). Has a crucial role in the pathway because the rate of histidine biosynthesis seems to be controlled primarily by regulation of HisG enzymatic activity. This Novosphingobium aromaticivorans (strain ATCC 700278 / DSM 12444 / CCUG 56034 / CIP 105152 / NBRC 16084 / F199) protein is ATP phosphoribosyltransferase.